The primary structure comprises 150 residues: Large ribosomal subunit protein uL13 (150 aa).

The segment at 129 to 150 (PEHPHSAQRPQTLQLNPAASSQ) is disordered. The segment covering 136-150 (QRPQTLQLNPAASSQ) has biased composition (polar residues).

It belongs to the universal ribosomal protein uL13 family. In terms of assembly, part of the 50S ribosomal subunit.

In terms of biological role, this protein is one of the early assembly proteins of the 50S ribosomal subunit, although it is not seen to bind rRNA by itself. It is important during the early stages of 50S assembly. The protein is Large ribosomal subunit protein uL13 of Prochlorococcus marinus (strain MIT 9303).